The sequence spans 1401 residues: Enhancer of mRNA-decapping protein 4 (1401 aa).

Alanine 2 bears the N-acetylalanine mark. Phosphoserine is present on residues serine 3 and serine 6. Residues 23–42 (DRPAGGPSAESPRPSSAYNG) form a disordered region. 7 WD repeats span residues 121-164 (QPVA…VISV), 167-206 (SERTLLKGFTGSVADLAFAHLNSPQLACLDEAGNLFVWRL), 217-269 (ILVH…VWDL), 287-326 (KQGFIVVKGHSTCLSEGALSPDGTVLATASHDGYVKFWQI), 335-385 (RCLH…MWCT), 389-426 (TCLQTIRFSPDIFSSVSVPPSLKVCLDLSAEYLILSDV), and 432-475 (YVME…LRHT). Residue lysine 125 is modified to N6-acetyllysine. Residues 545 to 565 (TFGESRPELGSEGLGSAAHGS) are disordered. Phosphoserine is present on residues serine 560, serine 565, serine 583, and serine 585. Disordered stretches follow at residues 603–628 (ASLQQITASPSSSSSGSSSSSSSSSS) and 662–702 (DGSL…QVPT). A compositionally biased stretch (low complexity) spans 609–628 (TASPSSSSSGSSSSSSSSSS). Polar residues predominate over residues 663–675 (GSLTMSSSGSLQA). Residue serine 676 is modified to Phosphoserine. Over residues 677 to 689 (PRGLLPGLLPAPA) the composition is skewed to low complexity. Position 693 is a phosphothreonine (threonine 693). Phosphoserine is present on residues serine 708, serine 723, and serine 725. Disordered stretches follow at residues 717 to 741 (LGLPQASPSRTRSPDVISSASTALS) and 778 to 808 (LLSPRPRPGPELGPQLGLDGGPGDGDRHNTP). Positions 722–741 (ASPSRTRSPDVISSASTALS) are enriched in polar residues. Threonine 727 is subject to Phosphothreonine. A phosphoserine mark is found at serine 729 and serine 741. The residue at position 821 (threonine 821) is a Phosphothreonine. Residues serine 844, serine 871, serine 875, serine 879, serine 887, serine 890, and serine 892 each carry the phosphoserine modification. Positions 868 to 946 (QRDSQDASAE…RLTEHQVAEP (79 aa)) are disordered. Residues 913–934 (GSPRTSPKLKRKSKKDDGDAAM) form a sufficient for nuclear localization region. The stretch at 954–1025 (IWQQQRELAE…GGQLQEQLTQ (72 aa)) forms a coiled coil. A phosphoserine mark is found at serine 967 and serine 1380.

This sequence belongs to the WD repeat EDC4 family. Part of a decapping complex consisting of DCP1A, DCP2, EDC3, EDC4 and probably DDX6. Part of a complex consisting of DCP1A, EDC3, EDC4 and DDX6. Part of a complex consisting of DCP1B, EDC3, EDC4 and DDX6. Interacts with DCP2. Interacts with RC3H1. Interacts with NBDY. Interacts with TEX19. Interacts with LSM14A. Interacts with DDX6. As to quaternary structure, (Microbial infection) Interacts with rotavirus A non-structural protein 2; this interaction probably plays a role in the sequestration of EDC4 in viral factories. Interacts with rotavirus A non-structural protein 5; this interaction probably plays a role in its sequestration in viral factories.

The protein resides in the cytoplasm. It localises to the P-body. It is found in the nucleus. In terms of biological role, in the process of mRNA degradation, seems to play a role in mRNA decapping. Component of a complex containing DCP2 and DCP1A which functions in decapping of ARE-containing mRNAs. Promotes complex formation between DCP1A and DCP2. Enhances the catalytic activity of DCP2 (in vitro). The sequence is that of Enhancer of mRNA-decapping protein 4 (EDC4) from Homo sapiens (Human).